A 146-amino-acid chain; its full sequence is UPF0742 protein C1348.03 (146 aa).

Residues 38–60 traverse the membrane as a helical segment; it reads LTVKYCLAVKLLIYLLYCWYIYS.

It belongs to the UPF0742 family.

The protein resides in the cytoplasm. The protein localises to the nucleus membrane. In Schizosaccharomyces pombe (strain 972 / ATCC 24843) (Fission yeast), this protein is UPF0742 protein C1348.03.